We begin with the raw amino-acid sequence, 354 residues long: MSSLRAHQKKNPTPTQCQNQTTLDSICKDIQTGKITRIVALVGAGLSTSSGLADFRTPDTGLYAKLEPLQLPYPEALFHISYFKHTPEPFYAIARGRHPWNTKPGVGHAFLALLEKKGVLGFVFTQNIDGLELDAGVSRERVMNLHGDWSDQHCIKCRSSYPADRMRKAILTGEVPFCVQANCEGIVKPAIVMFGESLPEGFDSREEEMLSTADLLLVIGTSLKVAPCSEIPRRLPSHVPRVLVNRELVGNIGTRESDVCLLGDCDAWLREVARHLGWDEELESVWKDTLVRKEKSSRDKGWDDKAEQSPTLEECIVRAAEQMKVRMGVSEGHRRMLEGHLGEKMAEIMAKRGQ.

Positions 16–279 (QCQNQTTLDS…REVARHLGWD (264 aa)) constitute a Deacetylase sirtuin-type domain. NAD(+)-binding positions include 43–63 (GAGL…TGLY) and 126–129 (QNID). The active-site Proton acceptor is the His-146. Positions 154, 157, 178, and 183 each coordinate Zn(2+). Residues 220-222 (GTS), 245-247 (NRE), and Cys-265 each bind NAD(+).

This sequence belongs to the sirtuin family. Class I subfamily. Zn(2+) is required as a cofactor.

It localises to the nucleus. It catalyses the reaction N(6)-acetyl-L-lysyl-[protein] + NAD(+) + H2O = 2''-O-acetyl-ADP-D-ribose + nicotinamide + L-lysyl-[protein]. NAD-dependent histone deacetylase, which could function in telomeric silencing, cell cycle progression and chromosome stability. This chain is NAD-dependent protein deacetylase hst2-2, found in Emericella nidulans (strain FGSC A4 / ATCC 38163 / CBS 112.46 / NRRL 194 / M139) (Aspergillus nidulans).